A 658-amino-acid chain; its full sequence is Threonine--tRNA ligase (658 aa).

The TGS domain maps to 1–61 (MSDVRVTVQR…AAGDVVEPIT (61 aa)). The catalytic stretch occupies residues 259–554 (DHRRLGAELD…LLEHYAGALP (296 aa)). Positions 353, 404, and 531 each coordinate Zn(2+).

Belongs to the class-II aminoacyl-tRNA synthetase family. Homodimer. Requires Zn(2+) as cofactor.

The protein localises to the cytoplasm. It catalyses the reaction tRNA(Thr) + L-threonine + ATP = L-threonyl-tRNA(Thr) + AMP + diphosphate + H(+). Functionally, catalyzes the attachment of threonine to tRNA(Thr) in a two-step reaction: L-threonine is first activated by ATP to form Thr-AMP and then transferred to the acceptor end of tRNA(Thr). Also edits incorrectly charged L-seryl-tRNA(Thr). This chain is Threonine--tRNA ligase, found in Parafrankia sp. (strain EAN1pec).